The following is a 248-amino-acid chain: UPF0736 protein Bcer98_0893 (248 aa).

Belongs to the UPF0736 family.

This chain is UPF0736 protein Bcer98_0893, found in Bacillus cytotoxicus (strain DSM 22905 / CIP 110041 / 391-98 / NVH 391-98).